Consider the following 352-residue polypeptide: Phosphoribosylformylglycinamidine cyclo-ligase (352 aa).

The protein belongs to the AIR synthase family.

It localises to the cytoplasm. The enzyme catalyses 2-formamido-N(1)-(5-O-phospho-beta-D-ribosyl)acetamidine + ATP = 5-amino-1-(5-phospho-beta-D-ribosyl)imidazole + ADP + phosphate + H(+). It participates in purine metabolism; IMP biosynthesis via de novo pathway; 5-amino-1-(5-phospho-D-ribosyl)imidazole from N(2)-formyl-N(1)-(5-phospho-D-ribosyl)glycinamide: step 2/2. In Stenotrophomonas maltophilia (strain K279a), this protein is Phosphoribosylformylglycinamidine cyclo-ligase.